Here is a 233-residue protein sequence, read N- to C-terminus: N-(5'-phosphoribosyl)anthranilate isomerase (233 aa).

The protein belongs to the TrpF family.

The catalysed reaction is N-(5-phospho-beta-D-ribosyl)anthranilate = 1-(2-carboxyphenylamino)-1-deoxy-D-ribulose 5-phosphate. It functions in the pathway amino-acid biosynthesis; L-tryptophan biosynthesis; L-tryptophan from chorismate: step 3/5. This is N-(5'-phosphoribosyl)anthranilate isomerase from Synechococcus sp. (strain JA-2-3B'a(2-13)) (Cyanobacteria bacterium Yellowstone B-Prime).